A 310-amino-acid chain; its full sequence is MRRLIPILLGSLVLSLSILVAPAASWAYPFWAQQNYDNPREATGKIVCANCHLAQKTTQAEVPQSVLPDSVFKAVVKIPYKKDTTEISSDGSDVPLQVGAVVMLPDGFKLAPQDRWSEEIKEETKGVFFTQYSEEKENILLVGPLPGDNNKEIVFPILSPDPATDSSIQFGKYSIHVGGNRGRGQILPTGEKTNNNAFTATEAGTITSIKAGKNGESDIKLKTDSGKVISETIPAGPTLLVKVDDKVEAGAPLTSDPNSGGFGQLDTEVVLQNPVRIYGLLAFFVAVSLAQILLVLKKKQVEKVQAAEGI.

The signal sequence occupies residues 1–23 (MRRLIPILLGSLVLSLSILVAPA). Residues Tyr28, Cys48, Cys51, and His52 each coordinate heme. Residues 277–297 (IYGLLAFFVAVSLAQILLVLK) traverse the membrane as a helical segment.

This sequence belongs to the cytochrome f family. As to quaternary structure, the 4 large subunits of the cytochrome b6-f complex are cytochrome b6, subunit IV (17 kDa polypeptide, PetD), cytochrome f and the Rieske protein, while the 4 small subunits are PetG, PetL, PetM and PetN. The complex functions as a dimer. The cofactor is heme.

The protein localises to the cellular thylakoid membrane. In terms of biological role, component of the cytochrome b6-f complex, which mediates electron transfer between photosystem II (PSII) and photosystem I (PSI), cyclic electron flow around PSI, and state transitions. In Prochlorococcus marinus (strain MIT 9303), this protein is Cytochrome f.